The sequence spans 164 residues: N5-carboxyaminoimidazole ribonucleotide mutase (164 aa).

3 residues coordinate substrate: serine 13, aspartate 16, and arginine 43.

This sequence belongs to the AIR carboxylase family. Class I subfamily.

It carries out the reaction 5-carboxyamino-1-(5-phospho-D-ribosyl)imidazole + H(+) = 5-amino-1-(5-phospho-D-ribosyl)imidazole-4-carboxylate. The protein operates within purine metabolism; IMP biosynthesis via de novo pathway; 5-amino-1-(5-phospho-D-ribosyl)imidazole-4-carboxylate from 5-amino-1-(5-phospho-D-ribosyl)imidazole (N5-CAIR route): step 2/2. Its function is as follows. Catalyzes the conversion of N5-carboxyaminoimidazole ribonucleotide (N5-CAIR) to 4-carboxy-5-aminoimidazole ribonucleotide (CAIR). This is N5-carboxyaminoimidazole ribonucleotide mutase from Haemophilus influenzae (strain ATCC 51907 / DSM 11121 / KW20 / Rd).